The primary structure comprises 79 residues: MKLTCVLIIAVLFLTACQLTTGETYSRGEQKDHALRSTDKNSKLTRQCSPNGGSCSRHYHCCSLWCNKDSGVCVATSYP.

A signal peptide spans 1-22; the sequence is MKLTCVLIIAVLFLTACQLTTG. A propeptide spanning residues 23–46 is cleaved from the precursor; it reads ETYSRGEQKDHALRSTDKNSKLTR. Pyrrolidone carboxylic acid is present on Gln-47. Cystine bridges form between Cys-48–Cys-62, Cys-55–Cys-66, and Cys-61–Cys-73.

Belongs to the conotoxin O1 superfamily. As to expression, expressed by the venom duct.

It localises to the secreted. The protein is Conotoxin ArMKLT2-031 of Conus arenatus (Sand-dusted cone).